We begin with the raw amino-acid sequence, 416 residues long: Transcription factor LATE FLOWERING (416 aa).

2 stretches are compositionally biased toward low complexity: residues 176-186 (STTTTTTALPP) and 200-212 (TSPT…TSET). Disordered regions lie at residues 176-226 (STTT…AGGS) and 276-311 (LGGP…QTVA). The basic motif; degenerate stretch occupies residues 303-316 (ISSDPQTVAARLRR). A bHLH domain is found at 303–352 (ISSDPQTVAARLRRERVSERLRVLQRLVPGGSKMDTATMLDEAASYLKFL). Residues 317 to 352 (ERVSERLRVLQRLVPGGSKMDTATMLDEAASYLKFL) are helix-loop-helix motif.

It belongs to the bHLH protein family. Interacts with PIL13 and PIL15.

It is found in the nucleus. Functionally, transcription factor involved in the negative regulation of flowering. May be involved in the repression of the flowering factor GI and HD1 by interacting with PIL13 and PIL15 and competing with PRR1. Possesses transactivation activity in yeast. The polypeptide is Transcription factor LATE FLOWERING (Oryza sativa subsp. japonica (Rice)).